Here is a 446-residue protein sequence, read N- to C-terminus: Tripartite motif-containing protein 43C (446 aa).

An RING-type zinc finger spans residues 16 to 57; it reads CSICQGIFMDPVYLRCGHKFCETCLLLFQEDIKFPAYCPTCR. A B box-type zinc finger spans residues 88–129; sequence SEEHKCVTHKAKKMIFCDKSKILLCHLCSDSQEHSGHTHCSI. The Zn(2+) site is built by C93, H96, C115, and H121. The 176-residue stretch at 271-446 folds into the B30.2/SPRY domain; it reads RLRAHSIPGL…VRPFFFAAYT (176 aa).

This sequence belongs to the TRIM/RBCC family.

The protein is Tripartite motif-containing protein 43C of Mus musculus (Mouse).